A 158-amino-acid chain; its full sequence is Small ribosomal subunit protein uS7 (158 aa).

Belongs to the universal ribosomal protein uS7 family. In terms of assembly, part of the 30S ribosomal subunit. Contacts proteins S9 and S11.

One of the primary rRNA binding proteins, it binds directly to 16S rRNA where it nucleates assembly of the head domain of the 30S subunit. Is located at the subunit interface close to the decoding center, probably blocks exit of the E-site tRNA. This chain is Small ribosomal subunit protein uS7, found in Granulibacter bethesdensis (strain ATCC BAA-1260 / CGDNIH1).